Consider the following 163-residue polypeptide: Large ribosomal subunit protein bL21 (163 aa).

The disordered stretch occupies residues 124 to 163; the sequence is KETTKKTKATVSIKKTAKKPSEKKSAPQKKAAVVSNNKED.

This sequence belongs to the bacterial ribosomal protein bL21 family. In terms of assembly, part of the 50S ribosomal subunit. Contacts protein L20.

This protein binds to 23S rRNA in the presence of protein L20. In Bartonella quintana (strain Toulouse) (Rochalimaea quintana), this protein is Large ribosomal subunit protein bL21.